Reading from the N-terminus, the 96-residue chain is Protein Vpr (96 aa).

The interval 1–42 (MEQAPEDQGPQREPYNEWALELLEELKNEAVRHFPRLWLHGL) is homooligomerization. Ser79 and Ser96 each carry phosphoserine; by host.

Belongs to the HIV-1 VPR protein family. As to quaternary structure, homooligomer, may form homodimer. Interacts with p6-gag region of the Pr55 Gag precursor protein through a (Leu-X-X)4 motif near the C-terminus of the P6gag protein. Interacts with host UNG. May interact with host RAD23A/HHR23A. Interacts with host VPRBP/DCAF1, leading to hijack the CUL4A-RBX1-DDB1-DCAF1/VPRBP complex, mediating ubiquitination of host proteins such as TERT and ZGPAT and arrest of the cell cycle in G2 phase. Phosphorylated on several residues by host. These phosphorylations regulate VPR activity for the nuclear import of the HIV-1 pre-integration complex.

It is found in the virion. The protein localises to the host nucleus. Its subcellular location is the host extracellular space. Its function is as follows. During virus replication, may deplete host UNG protein, and incude G2-M cell cycle arrest. Acts by targeting specific host proteins for degradation by the 26S proteasome, through association with the cellular CUL4A-DDB1 E3 ligase complex by direct interaction with host VPRPB/DCAF-1. Cell cycle arrest reportedly occurs within hours of infection and is not blocked by antiviral agents, suggesting that it is initiated by the VPR carried into the virion. Additionally, VPR induces apoptosis in a cell cycle dependent manner suggesting that these two effects are mechanistically linked. Detected in the serum and cerebrospinal fluid of AIDS patient, VPR may also induce cell death to bystander cells. During virus entry, plays a role in the transport of the viral pre-integration (PIC) complex to the host nucleus. This function is crucial for viral infection of non-dividing macrophages. May act directly at the nuclear pore complex, by binding nucleoporins phenylalanine-glycine (FG)-repeat regions. The protein is Protein Vpr of Human immunodeficiency virus type 1 group M subtype G (isolate SE6165) (HIV-1).